The chain runs to 470 residues: UDP-N-acetylmuramate--L-alanine ligase (470 aa).

Glycine 114–threonine 120 serves as a coordination point for ATP.

Belongs to the MurCDEF family.

It is found in the cytoplasm. The enzyme catalyses UDP-N-acetyl-alpha-D-muramate + L-alanine + ATP = UDP-N-acetyl-alpha-D-muramoyl-L-alanine + ADP + phosphate + H(+). It participates in cell wall biogenesis; peptidoglycan biosynthesis. Its function is as follows. Cell wall formation. This chain is UDP-N-acetylmuramate--L-alanine ligase, found in Xanthobacter autotrophicus (strain ATCC BAA-1158 / Py2).